The following is a 126-amino-acid chain: Small ribosomal subunit protein uS12 (126 aa).

The disordered stretch occupies residues Met1–Asp26. A 3-methylthioaspartic acid modification is found at Asp89. The disordered stretch occupies residues Leu102 to Lys126. The segment covering Ala113–Lys126 has biased composition (basic residues).

Belongs to the universal ribosomal protein uS12 family. Part of the 30S ribosomal subunit. Contacts proteins S8 and S17. May interact with IF1 in the 30S initiation complex.

Functionally, with S4 and S5 plays an important role in translational accuracy. Its function is as follows. Interacts with and stabilizes bases of the 16S rRNA that are involved in tRNA selection in the A site and with the mRNA backbone. Located at the interface of the 30S and 50S subunits, it traverses the body of the 30S subunit contacting proteins on the other side and probably holding the rRNA structure together. The combined cluster of proteins S8, S12 and S17 appears to hold together the shoulder and platform of the 30S subunit. In Burkholderia mallei (strain ATCC 23344), this protein is Small ribosomal subunit protein uS12.